The chain runs to 132 residues: Small ribosomal subunit protein uS8 (132 aa).

Belongs to the universal ribosomal protein uS8 family. As to quaternary structure, part of the 30S ribosomal subunit. Contacts proteins S5 and S12.

Functionally, one of the primary rRNA binding proteins, it binds directly to 16S rRNA central domain where it helps coordinate assembly of the platform of the 30S subunit. The protein is Small ribosomal subunit protein uS8 of Gluconacetobacter diazotrophicus (strain ATCC 49037 / DSM 5601 / CCUG 37298 / CIP 103539 / LMG 7603 / PAl5).